A 749-amino-acid polypeptide reads, in one-letter code: Myosin-binding protein 2 (749 aa).

Residues 17-37 (ITLILVYAFLEWSLIFFILLN) form a helical membrane-spanning segment. Residues 164-184 (NLNDSQEETEEKKVPQSHEKL) are disordered. Basic and acidic residues predominate over residues 173-184 (EEKKVPQSHEKL). Positions 411 to 509 (LTVDKLKFEL…ELEKELEVYR (99 aa)) constitute a GTD-binding domain. The stretch at 589–621 (ERLSILGRLKFLEEKLTDLNNEEDDEEEAKTFE) forms a coiled coil. The segment at 608 to 640 (NNEEDDEEEAKTFESNGSINGNEHIHGKETNGK) is disordered. Positions 630 to 639 (EHIHGKETNG) are enriched in basic and acidic residues. Residues 676–710 (DSEKGENVTIEEEVDELYERLEALEADREFLRHCV) are a coiled coil.

In terms of assembly, interacts with myosin XI-K and XI-1. As to expression, expressed in leaf epidermal cells, roots and root hairs.

The protein localises to the endomembrane system. Functionally, membrane-anchored myosin receptors that define a distinct, plant-specific transport vesicle compartment. In Arabidopsis thaliana (Mouse-ear cress), this protein is Myosin-binding protein 2.